The chain runs to 389 residues: Protein P4 (389 aa).

In Rice tungro bacilliform virus (isolate Philippines) (RTBV), this protein is Protein P4.